A 133-amino-acid polypeptide reads, in one-letter code: UPF0102 protein bll0669 (133 aa).

It belongs to the UPF0102 family.

In Bradyrhizobium diazoefficiens (strain JCM 10833 / BCRC 13528 / IAM 13628 / NBRC 14792 / USDA 110), this protein is UPF0102 protein bll0669.